We begin with the raw amino-acid sequence, 417 residues long: Phosphoribosylamine--glycine ligase (417 aa).

The ATP-grasp domain occupies 108–307 (KRIMDEAGVP…LSTLLFAAAT (200 aa)). 134–188 (LDEFGAPYVVKADGLAAGKGVIVTEDRAAALAHAARYLTHGSVLVEEFLDGEEVS) serves as a coordination point for ATP. Glu277 and Asn279 together coordinate Mg(2+).

This sequence belongs to the GARS family. Mg(2+) serves as cofactor. The cofactor is Mn(2+).

It carries out the reaction 5-phospho-beta-D-ribosylamine + glycine + ATP = N(1)-(5-phospho-beta-D-ribosyl)glycinamide + ADP + phosphate + H(+). Its pathway is purine metabolism; IMP biosynthesis via de novo pathway; N(1)-(5-phospho-D-ribosyl)glycinamide from 5-phospho-alpha-D-ribose 1-diphosphate: step 2/2. In Leifsonia xyli subsp. xyli (strain CTCB07), this protein is Phosphoribosylamine--glycine ligase.